Reading from the N-terminus, the 83-residue chain is Toxin BmKBT (83 aa).

Residues 1–19 (MKAALLLVIFSLMLIGVLT) form the signal peptide. The region spanning 21-81 (KSGYPTDHEG…TWSRATNKCR (61 aa)) is the LCN-type CS-alpha/beta domain. Disulfide bonds link cysteine 31/cysteine 80, cysteine 35/cysteine 54, cysteine 41/cysteine 61, and cysteine 45/cysteine 63. Position 83 (lysine 83) is a propeptide, removed by a carboxypeptidase.

The protein belongs to the long (4 C-C) scorpion toxin superfamily. Sodium channel inhibitor family. Beta subfamily. Expressed by the venom gland.

It localises to the secreted. Its function is as follows. This toxin increases the peak sodium current, slows down the inactivation of sodium channels (Nav), and prolongs the action potential of dorsal root ganglion neurons, which indicates that it behaves as a classical alpha-toxin. It binds to mammal brain and insect sodium channels, but with a different manner. This peptide may bind to a distinct receptor site on mammal brain sodium channels, which is unconnected with that for BmKAS (a beta-toxin), BmKIT2 (a beta-toxin) or BmK I (an alpha toxin). In contrast, the receptor site for BmKabT on insect sodium channels might be closely related to that for the beta-insect depressant toxin BmKIT2. Possesses potent toxicity in mice but induces only paralysis in cotton bollworm. The polypeptide is Toxin BmKBT (Olivierus martensii (Manchurian scorpion)).